The primary structure comprises 437 residues: Elongation factor 1-gamma (437 aa).

A2 carries the post-translational modification N-acetylalanine. The GST N-terminal domain maps to 2 to 87 (AAGTLYTYPE…YVSNEELRGS (86 aa)). The GST C-terminal domain maps to 88 to 216 (TPEAAAQVVQ…VKLCEKMAQF (129 aa)). N6-acetyllysine occurs at positions 147 and 212. Residues 221-254 (FAESQPKKDTPRKEKGSREEKQKPQAERKEEKKA) show a composition bias toward basic and acidic residues. The segment at 221–268 (FAESQPKKDTPRKEKGSREEKQKPQAERKEEKKAAAPAPEEEMDECEQ) is disordered. A Glycyl lysine isopeptide (Lys-Gly) (interchain with G-Cter in SUMO1) cross-link involves residue K253. An EF-1-gamma C-terminal domain is found at 276–437 (AKDPFAHLPK…KAVNQGKIFK (162 aa)). A Glycyl lysine isopeptide (Lys-Gly) (interchain with G-Cter in SUMO2) cross-link involves residue K285. N6-acetyllysine is present on K401. At K434 the chain carries N6-acetyllysine; alternate. Position 434 is an N6-malonyllysine; alternate (K434).

As to quaternary structure, EF-1 is composed of four subunits: alpha, beta, delta, and gamma.

Its function is as follows. Probably plays a role in anchoring the complex to other cellular components. This chain is Elongation factor 1-gamma (Eef1g), found in Mus musculus (Mouse).